Here is a 245-residue protein sequence, read N- to C-terminus: Probable transcriptional regulatory protein Aflv_0709 (245 aa).

Positions 1–14 (MAGHSKWKNIQRRK) are enriched in basic residues. The interval 1 to 21 (MAGHSKWKNIQRRKNAQDAKR) is disordered.

Belongs to the TACO1 family.

The protein resides in the cytoplasm. The polypeptide is Probable transcriptional regulatory protein Aflv_0709 (Anoxybacillus flavithermus (strain DSM 21510 / WK1)).